Reading from the N-terminus, the 367-residue chain is Anhydro-N-acetylmuramic acid kinase (367 aa).

Position 13-20 (13-20) interacts with ATP; it reads GTSMDGAD.

This sequence belongs to the anhydro-N-acetylmuramic acid kinase family.

The enzyme catalyses 1,6-anhydro-N-acetyl-beta-muramate + ATP + H2O = N-acetyl-D-muramate 6-phosphate + ADP + H(+). The protein operates within amino-sugar metabolism; 1,6-anhydro-N-acetylmuramate degradation. Its pathway is cell wall biogenesis; peptidoglycan recycling. Functionally, catalyzes the specific phosphorylation of 1,6-anhydro-N-acetylmuramic acid (anhMurNAc) with the simultaneous cleavage of the 1,6-anhydro ring, generating MurNAc-6-P. Is required for the utilization of anhMurNAc either imported from the medium or derived from its own cell wall murein, and thus plays a role in cell wall recycling. This Neisseria meningitidis serogroup A / serotype 4A (strain DSM 15465 / Z2491) protein is Anhydro-N-acetylmuramic acid kinase.